Here is a 464-residue protein sequence, read N- to C-terminus: UPF0210 protein Cgl1545/cg1743 (464 aa).

This sequence belongs to the UPF0210 family. Homodimer.

The sequence is that of UPF0210 protein Cgl1545/cg1743 from Corynebacterium glutamicum (strain ATCC 13032 / DSM 20300 / JCM 1318 / BCRC 11384 / CCUG 27702 / LMG 3730 / NBRC 12168 / NCIMB 10025 / NRRL B-2784 / 534).